Here is a 440-residue protein sequence, read N- to C-terminus: Xylose isomerase (440 aa).

Catalysis depends on residues histidine 101 and aspartate 104. Mg(2+) is bound by residues glutamate 232, glutamate 268, histidine 271, aspartate 296, aspartate 307, aspartate 309, and aspartate 339.

The protein belongs to the xylose isomerase family. Homotetramer. Mg(2+) is required as a cofactor.

The protein resides in the cytoplasm. The enzyme catalyses alpha-D-xylose = alpha-D-xylulofuranose. This is Xylose isomerase from Escherichia coli (strain SMS-3-5 / SECEC).